A 107-amino-acid chain; its full sequence is Phosphoribosyl-ATP pyrophosphatase (107 aa).

The protein belongs to the PRA-PH family.

It localises to the cytoplasm. It catalyses the reaction 1-(5-phospho-beta-D-ribosyl)-ATP + H2O = 1-(5-phospho-beta-D-ribosyl)-5'-AMP + diphosphate + H(+). It participates in amino-acid biosynthesis; L-histidine biosynthesis; L-histidine from 5-phospho-alpha-D-ribose 1-diphosphate: step 2/9. In Bacillus cytotoxicus (strain DSM 22905 / CIP 110041 / 391-98 / NVH 391-98), this protein is Phosphoribosyl-ATP pyrophosphatase.